The following is a 697-amino-acid chain: Elongation factor G 2 (697 aa).

The region spanning 5 to 280 (SKYRNIGIFA…AVVDYLPDPV (276 aa)) is the tr-type G domain. Residues 14–21 (AHVDAGKT), 78–82 (DTPGH), and 132–135 (NKLD) each bind GTP.

The protein belongs to the TRAFAC class translation factor GTPase superfamily. Classic translation factor GTPase family. EF-G/EF-2 subfamily.

It localises to the cytoplasm. Functionally, catalyzes the GTP-dependent ribosomal translocation step during translation elongation. During this step, the ribosome changes from the pre-translocational (PRE) to the post-translocational (POST) state as the newly formed A-site-bound peptidyl-tRNA and P-site-bound deacylated tRNA move to the P and E sites, respectively. Catalyzes the coordinated movement of the two tRNA molecules, the mRNA and conformational changes in the ribosome. The polypeptide is Elongation factor G 2 (Shewanella frigidimarina (strain NCIMB 400)).